Reading from the N-terminus, the 453-residue chain is Transcription factor radR (453 aa).

Residues 1-30 (MPNNLQHQEGSYSLRSSNDVSPADDWTQTN) show a composition bias toward polar residues. The tract at residues 1–45 (MPNNLQHQEGSYSLRSSNDVSPADDWTQTNDPKEKKRIQNRVAQR) is disordered. The 33-residue stretch at 30–62 (NDPKEKKRIQNRVAQRTYRNRIRARLEELENKI) folds into the bZIP domain. The tract at residues 33–50 (KEKKRIQNRVAQRTYRNR) is basic motif. Residues 51 to 58 (IRARLEEL) are leucine-zipper. The tract at residues 160–184 (APRAAQARSIAPTSTGMHQISPSYG) is disordered. Over residues 170 to 181 (APTSTGMHQISP) the composition is skewed to polar residues.

The protein belongs to the bZIP family.

Its subcellular location is the nucleus. Transcription factor that positively regulates the expression of the gene clusters that mediate the biosynthesis of pestheic acid, a diphenyl ether which is a biosynthetic precursor of the unique chloropupukeananes. This Floropilus chiversii (Chaetomium chiversii) protein is Transcription factor radR.